The following is a 162-amino-acid chain: Peptidyl-prolyl cis-trans isomerase-like 1 (162 aa).

Positions Met-1 to Ile-155 constitute a PPIase cyclophilin-type domain.

The protein belongs to the cyclophilin-type PPIase family. PPIL1 subfamily.

The enzyme catalyses [protein]-peptidylproline (omega=180) = [protein]-peptidylproline (omega=0). In terms of biological role, PPIases accelerate the folding of proteins. It catalyzes the cis-trans isomerization of proline imidic peptide bonds in oligopeptides. The polypeptide is Peptidyl-prolyl cis-trans isomerase-like 1 (cypC) (Aspergillus niger).